A 121-amino-acid chain; its full sequence is Large ribosomal subunit protein uL18 (121 aa).

This sequence belongs to the universal ribosomal protein uL18 family. In terms of assembly, part of the 50S ribosomal subunit; part of the 5S rRNA/L5/L18/L25 subcomplex. Contacts the 5S and 23S rRNAs.

In terms of biological role, this is one of the proteins that bind and probably mediate the attachment of the 5S RNA into the large ribosomal subunit, where it forms part of the central protuberance. The polypeptide is Large ribosomal subunit protein uL18 (Paracidovorax citrulli (strain AAC00-1) (Acidovorax citrulli)).